We begin with the raw amino-acid sequence, 205 residues long: Ribonuclease HII (205 aa).

The RNase H type-2 domain maps to 14-201; sequence EIVAGVDEAG…KGNINHSAIL (188 aa). A divalent metal cation-binding residues include Asp20, Glu21, and Asp111.

The protein belongs to the RNase HII family. Requires Mn(2+) as cofactor. The cofactor is Mg(2+).

It localises to the cytoplasm. It carries out the reaction Endonucleolytic cleavage to 5'-phosphomonoester.. Endonuclease that specifically degrades the RNA of RNA-DNA hybrids. This is Ribonuclease HII from Orientia tsutsugamushi (strain Boryong) (Rickettsia tsutsugamushi).